Here is a 676-residue protein sequence, read N- to C-terminus: XK-related protein 5 (676 aa).

Helical transmembrane passes span 37–57 (WLAL…FLWF), 114–134 (LLEA…VFLA), 140–160 (IVPG…LVSY), 206–226 (VWVL…LVAQ), 239–259 (LFNL…WDSP), 266–286 (SFYL…TDFL), and 294–314 (LWTV…LVIY). Disordered regions lie at residues 336 to 362 (PIED…DSSS), 372 to 391 (TSLD…GLGE), 495 to 538 (LEDN…KEGQ), and 598 to 661 (PIPG…IQRD). Residues 498–509 (NATTQKPPATQE) show a composition bias toward polar residues.

Belongs to the XK family.

It is found in the cell membrane. The protein is XK-related protein 5 of Mus musculus (Mouse).